Consider the following 487-residue polypeptide: L-tartrate/succinate antiporter (487 aa).

A run of 14 helical transmembrane segments spans residues 10–30, 33–53, 54–74, 93–113, 137–157, 189–209, 236–256, 292–312, 313–333, 340–360, 370–390, 393–413, 418–438, and 465–485; these read YLAP…AGLE, TWLY…EPVP, GAVV…WLLF, WAVF…FMFG, TLFL…VTPS, IGSY…AIFL, FLGM…LAYV, LMVG…AAMV, GYSV…DIVS, VFFW…TGFI, SLSG…FYLL, FFAS…AAAL, IPLP…SILT, and IFGL…MPVV.

Belongs to the SLC13A/DASS transporter (TC 2.A.47) family. DIT1 subfamily.

It localises to the cell inner membrane. It carries out the reaction (2R,3R)-tartrate(out) + succinate(in) = (2R,3R)-tartrate(in) + succinate(out). Its function is as follows. Catalyzes the uptake of tartrate in exchange for intracellular succinate. Essential for anaerobic L-tartrate fermentation. The chain is L-tartrate/succinate antiporter (ttdT) from Shigella boydii serotype 4 (strain Sb227).